A 387-amino-acid chain; its full sequence is S-adenosylmethionine synthase (387 aa).

Residue H15 participates in ATP binding. Residue D17 coordinates Mg(2+). A K(+)-binding site is contributed by E43. Positions 56 and 99 each coordinate L-methionine. The interval Q99–R109 is flexible loop. ATP contacts are provided by residues D166–K168, R232–F233, D241, R247–K248, A264, and K268. D241 is an L-methionine binding site. An L-methionine-binding site is contributed by K272.

This sequence belongs to the AdoMet synthase family. As to quaternary structure, homotetramer; dimer of dimers. Requires Mg(2+) as cofactor. K(+) serves as cofactor.

Its subcellular location is the cytoplasm. The enzyme catalyses L-methionine + ATP + H2O = S-adenosyl-L-methionine + phosphate + diphosphate. It participates in amino-acid biosynthesis; S-adenosyl-L-methionine biosynthesis; S-adenosyl-L-methionine from L-methionine: step 1/1. In terms of biological role, catalyzes the formation of S-adenosylmethionine (AdoMet) from methionine and ATP. The overall synthetic reaction is composed of two sequential steps, AdoMet formation and the subsequent tripolyphosphate hydrolysis which occurs prior to release of AdoMet from the enzyme. This is S-adenosylmethionine synthase from Nitrosomonas europaea (strain ATCC 19718 / CIP 103999 / KCTC 2705 / NBRC 14298).